The sequence spans 103 residues: Large ribosomal subunit protein bL21 (103 aa).

The protein belongs to the bacterial ribosomal protein bL21 family. In terms of assembly, part of the 50S ribosomal subunit. Contacts protein L20.

In terms of biological role, this protein binds to 23S rRNA in the presence of protein L20. The sequence is that of Large ribosomal subunit protein bL21 from Treponema denticola (strain ATCC 35405 / DSM 14222 / CIP 103919 / JCM 8153 / KCTC 15104).